Reading from the N-terminus, the 311-residue chain is Pseudouridine-5'-phosphate glycosidase (311 aa).

The active-site Proton donor is the Glu32. Substrate-binding residues include Lys96 and Val116. Asp148 lines the Mn(2+) pocket. 150-152 serves as a coordination point for substrate; sequence SAD. Lys169 acts as the Nucleophile in catalysis.

The protein belongs to the pseudouridine-5'-phosphate glycosidase family. As to quaternary structure, homotrimer. It depends on Mn(2+) as a cofactor.

The catalysed reaction is D-ribose 5-phosphate + uracil = psi-UMP + H2O. Functionally, catalyzes the reversible cleavage of pseudouridine 5'-phosphate (PsiMP) to ribose 5-phosphate and uracil. Functions biologically in the cleavage direction, as part of a pseudouridine degradation pathway. The protein is Pseudouridine-5'-phosphate glycosidase of Roseiflexus sp. (strain RS-1).